The sequence spans 291 residues: MKKTLMASAVGAVIAFGTHGAMAAAPADWSSVAATDVTLFYPGVSPVEWITKGTEHGGARALKKGETCAGCHSEEASDMGEKMASGKKLEPSPIAGKAPFINAKVQAANDGENLYLRFTWKQPAASGAAPMDADNPVKIAYMLEGGSKVELAEAGGCWGSCHGDARTMPGAADTKTKYVKDGSLANGVYYDLNQWRSGENKAFDGYVATERVMEGGQALVDAQGKLDGDTWTVVFTRKFAGGEGDVTLAPGNLYNFGFAIHDDSATGRYHHVSLGYSLGIDAQGDITAAKQ.

The N-terminal stretch at 1 to 23 (MKKTLMASAVGAVIAFGTHGAMA) is a signal peptide. Residues Cys-68, Cys-71, His-72, Cys-157, Cys-161, and His-162 each coordinate heme c.

Binds 2 heme c groups per subunit.

Its subcellular location is the periplasm. Functionally, may play a role in nitrite reduction. Shows peroxidase activity on proteolytic modification. In Stutzerimonas stutzeri (Pseudomonas stutzeri), this protein is Cytochrome c-552 (nirB).